Here is a 413-residue protein sequence, read N- to C-terminus: MTPSISWRLLLLAGLCCLVPSYLAEDVQETDTSQKDQSPASHEMATNLGDFAFSLYRELVHQSNTSNIFFSPVSIATAFALLSLGSKGDTQTQILEGLQFNLTQTSEADIHKVFQHLLQTLNRPDSELQLSTGNGLFVNNDLKLVEKFLEEAKNHYQSEVFSVNFAKSEEARKMINDFVEKGTQGKIVDAVKDLDEDTVFALANYIFFQGKWKTPFDPEHTTEADFHVNESTTVRVPMMNLMRMLDVHYCSTLSSWVLMMDYLGNATAVFLLPDDGKMQHLEQTLNKELISKFLLNRHRSLAEIHFPRLSISGSYNLKALMAPLGITRVFNNGADLSGITEENAPLRLSKAVHKAVLTIDERGTEAAATTIVEAVFMSLPPILHFNHPFVFTIVETHTQTPLFVGKVVDPTRK.

An N-terminal signal peptide occupies residues 1–24 (MTPSISWRLLLLAGLCCLVPSYLA). At Ser-33 the chain carries Phosphoserine. Asn-64, Asn-101, and Asn-265 each carry an N-linked (GlcNAc...) asparagine glycan. The RCL stretch occupies residues 368–387 (ATTIVEAVFMSLPPILHFNH). Residue Ser-378 is modified to Phosphoserine.

It belongs to the serpin family. In terms of assembly, interacts with CELA2A. Interacts with ERGIC3 and LMAN1/ERGIC53. Interacts with PRSS1/Trypsin.

The protein localises to the secreted. Inhibitor of serine proteases. The primary target is elastase, but also has a moderate affinity for plasmin and thrombin. The polypeptide is Alpha-1-antiproteinase (Serpina1) (Mus saxicola (Brown spiny mouse)).